We begin with the raw amino-acid sequence, 210 residues long: Prolactin-2 (210 aa).

The first 23 residues, 1-23 (MARRSQGTKLHLAVLCLVVSCHA), serve as a signal peptide directing secretion. Disulfide bonds link cysteine 69-cysteine 183 and cysteine 200-cysteine 210.

Belongs to the somatotropin/prolactin family.

It is found in the secreted. The protein is Prolactin-2 (prl2) of Oncorhynchus tshawytscha (Chinook salmon).